The chain runs to 46 residues: L-amino-acid oxidase (46 aa).

Asparagine 31 carries N-linked (GlcNAc...) asparagine glycosylation.

The protein belongs to the flavin monoamine oxidase family. FIG1 subfamily. It depends on FAD as a cofactor.

Its subcellular location is the secreted. It localises to the lysosome. The protein resides in the cytoplasmic vesicle. It is found in the secretory vesicle. The protein localises to the acrosome. It carries out the reaction an L-alpha-amino acid + O2 + H2O = a 2-oxocarboxylate + H2O2 + NH4(+). It catalyses the reaction L-tryptophan + O2 + H2O = indole-3-pyruvate + H2O2 + NH4(+). The enzyme catalyses L-phenylalanine + O2 + H2O = 3-phenylpyruvate + H2O2 + NH4(+). The catalysed reaction is L-tyrosine + O2 + H2O = 3-(4-hydroxyphenyl)pyruvate + H2O2 + NH4(+). It carries out the reaction L-arginine + O2 + H2O = 5-guanidino-2-oxopentanoate + H2O2 + NH4(+). It functions in the pathway amino-acid degradation; L-tryptophan degradation via pyruvate pathway. Its function is as follows. Secreted L-amino-acid oxidase that acts as a key immunoregulator. Has preference for L-aromatic amino acids: converts phenylalanine (Phe), tyrosine (Tyr) and tryptophan (Trp) to phenylpyruvic acid (PP), hydroxyphenylpyruvic acid (HPP), and indole-3-pyruvic acid (I3P), respectively. Also has weak L-arginine oxidase activity. Acts as a negative regulator of anti-tumor immunity by mediating Trp degradation via an indole pyruvate pathway that activates the transcription factor AHR. IL4I1-mediated Trp catabolism generates I3P, giving rise to indole metabolites (indole-3-acetic acid (IAA) and indole-3-aldehyde (I3A)) and kynurenic acid, which act as ligands for AHR, a ligand-activated transcription factor that plays important roles in immunity and cancer. AHR activation by indoles following IL4I1-mediated Trp degradation enhances tumor progression by promoting cancer cell motility and suppressing adaptive immunity. Also has an immunoregulatory function in some immune cells, probably by mediating Trp degradation and promoting downstream AHR activation: inhibits T-cell activation and proliferation, promotes the differentiation of naive CD4(+) T-cells into FOXP3(+) regulatory T-cells (Treg) and regulates the development and function of B-cells. Also regulates M2 macrophage polarization by inhibiting T-cell activation. Also has antibacterial properties by inhibiting growth of Gram negative and Gram positive bacteria through the production of NH4(+) and H2O2. In Mus spretus (Western Mediterranean mouse), this protein is L-amino-acid oxidase.